A 248-amino-acid chain; its full sequence is Glutamine-binding periplasmic protein (248 aa).

The N-terminal stretch at 1-22 (MKSVLKVSLAALTLAFAVSSHA) is a signal peptide.

It belongs to the bacterial solute-binding protein 3 family.

It localises to the periplasm. In terms of biological role, involved in a glutamine-transport system GlnHPQ. In Escherichia coli O157:H7, this protein is Glutamine-binding periplasmic protein (glnH).